Here is a 90-residue protein sequence, read N- to C-terminus: MLQYHMIADGRVQGVGFRYFVQMEADRHKVAGWVKNRDDGRVEILAEGPEESLKQFAEAVRKGSPFSNVTGVTIEESHRLKGYRTFSISY.

The region spanning Gln-3–Tyr-90 is the Acylphosphatase-like domain. Active-site residues include Arg-18 and Asn-36.

This sequence belongs to the acylphosphatase family.

It carries out the reaction an acyl phosphate + H2O = a carboxylate + phosphate + H(+). The polypeptide is Acylphosphatase (acyP) (Bacillus velezensis (strain DSM 23117 / BGSC 10A6 / LMG 26770 / FZB42) (Bacillus amyloliquefaciens subsp. plantarum)).